Reading from the N-terminus, the 148-residue chain is MFGSARILSDVTLRLRQNLSVHGVRVQNINIGGGVGGEIPDNKRLVYALQNLHGIGRSKAQHIVAELGVENKFVKDLSKRELYSIRELLSKYLIGNDLKKCVERDVGRLVGIQCYRGIRHVDSLPCRGQRTHTNARTRRSRKTFSGSR.

The transit peptide at 1–27 (MFGSARILSDVTLRLRQNLSVHGVRVQ) directs the protein to the mitochondrion. Positions 129 to 142 (QRTHTNARTRRSRK) are enriched in basic residues. The tract at residues 129–148 (QRTHTNARTRRSRKTFSGSR) is disordered.

Belongs to the universal ribosomal protein uS13 family. As to quaternary structure, part of the small ribosomal subunit.

It localises to the mitochondrion. Functionally, located at the top of the head of the small subunit, it contacts several helices of the 18S rRNA. The chain is Small ribosomal subunit protein uS13m (RSP13) from Glycine max (Soybean).